We begin with the raw amino-acid sequence, 306 residues long: MLNYVLKRLLGLIPTLLIVAVLVFLFVHLLPGDPARLIAGPEADAQVIALVRQQLGLDQPLHVQFWHYITHVLQGDFGTSMVSRRPVSEEIASRFLPTLWLTITSMIWAVLFGMAIGIAAAVWRNRWPDRVGMTLAVTGISFPAFALGMLLMQIFSVDLGWLPTVGADSWQHYILPSLTLGAAVASVMARFTRSSFVDVLSEDYMRTARAKGVSETWVVLKHGLRNAMIPVVTMMGLQFGFLLGGSIVVEKVFNWPGLGRLLVDSVDMRDYPVIQAEVLLFSLEFILINLVVDVLYAAINPAIRYK.

The Cytoplasmic portion of the chain corresponds to 1–8 (MLNYVLKR). Residues 9–29 (LLGLIPTLLIVAVLVFLFVHL) form a helical membrane-spanning segment. Residues 30–102 (LPGDPARLIA…SRFLPTLWLT (73 aa)) lie on the Periplasmic side of the membrane. The ABC transmembrane type-1 domain maps to 95–292 (FLPTLWLTIT…LEFILINLVV (198 aa)). Residues 103 to 123 (ITSMIWAVLFGMAIGIAAAVW) form a helical membrane-spanning segment. Topologically, residues 124–134 (RNRWPDRVGMT) are cytoplasmic. Residues 135–155 (LAVTGISFPAFALGMLLMQIF) traverse the membrane as a helical segment. Topologically, residues 156–168 (SVDLGWLPTVGAD) are periplasmic. A helical transmembrane segment spans residues 169–189 (SWQHYILPSLTLGAAVASVMA). Over 190–228 (RFTRSSFVDVLSEDYMRTARAKGVSETWVVLKHGLRNAM) the chain is Cytoplasmic. Residues 229-249 (IPVVTMMGLQFGFLLGGSIVV) form a helical membrane-spanning segment. Residues 250-278 (EKVFNWPGLGRLLVDSVDMRDYPVIQAEV) lie on the Periplasmic side of the membrane. A helical membrane pass occupies residues 279–299 (LLFSLEFILINLVVDVLYAAI). Residues 300–306 (NPAIRYK) lie on the Cytoplasmic side of the membrane.

This sequence belongs to the binding-protein-dependent transport system permease family. As to quaternary structure, the complex is composed of two ATP-binding proteins (GsiA), two transmembrane proteins (GsiC and GsiD) and a solute-binding protein (GsiB).

It is found in the cell inner membrane. Its function is as follows. Part of the ABC transporter complex GsiABCD involved in glutathione import. Probably responsible for the translocation of the substrate across the membrane. The polypeptide is Glutathione transport system permease protein GsiC (Salmonella choleraesuis (strain SC-B67)).